A 315-amino-acid polypeptide reads, in one-letter code: tRNA-dihydrouridine(16) synthase (315 aa).

FMN-binding positions include Pro7–Glu9 and Gln68. The Proton donor role is filled by Cys98. Residues Lys139, Asn199–Glu201, and Gly223–Arg224 each bind FMN.

It belongs to the Dus family. DusC subfamily. It depends on FMN as a cofactor.

It catalyses the reaction 5,6-dihydrouridine(16) in tRNA + NADP(+) = uridine(16) in tRNA + NADPH + H(+). The enzyme catalyses 5,6-dihydrouridine(16) in tRNA + NAD(+) = uridine(16) in tRNA + NADH + H(+). Functionally, catalyzes the synthesis of 5,6-dihydrouridine (D), a modified base found in the D-loop of most tRNAs, via the reduction of the C5-C6 double bond in target uridines. Specifically modifies U16 in tRNAs. The chain is tRNA-dihydrouridine(16) synthase from Shewanella oneidensis (strain ATCC 700550 / JCM 31522 / CIP 106686 / LMG 19005 / NCIMB 14063 / MR-1).